Reading from the N-terminus, the 311-residue chain is Probable manganese-dependent inorganic pyrophosphatase (311 aa).

Positions 9, 13, 15, 77, 99, and 151 each coordinate Mn(2+).

This sequence belongs to the PPase class C family. The cofactor is Mn(2+).

Its subcellular location is the cytoplasm. It catalyses the reaction diphosphate + H2O = 2 phosphate + H(+). The chain is Probable manganese-dependent inorganic pyrophosphatase from Streptococcus agalactiae serotype III (strain NEM316).